Reading from the N-terminus, the 266-residue chain is 3-methyl-2-oxobutanoate hydroxymethyltransferase (266 aa).

The Mg(2+) site is built by Asp45 and Asp84. 3-methyl-2-oxobutanoate contacts are provided by residues Asp45–Ser46, Asp84, and Lys112. Mg(2+) is bound at residue Glu114. Glu181 acts as the Proton acceptor in catalysis.

This sequence belongs to the PanB family. In terms of assembly, homodecamer; pentamer of dimers. Requires Mg(2+) as cofactor.

It is found in the cytoplasm. It catalyses the reaction 3-methyl-2-oxobutanoate + (6R)-5,10-methylene-5,6,7,8-tetrahydrofolate + H2O = 2-dehydropantoate + (6S)-5,6,7,8-tetrahydrofolate. The protein operates within cofactor biosynthesis; (R)-pantothenate biosynthesis; (R)-pantoate from 3-methyl-2-oxobutanoate: step 1/2. Catalyzes the reversible reaction in which hydroxymethyl group from 5,10-methylenetetrahydrofolate is transferred onto alpha-ketoisovalerate to form ketopantoate. This is 3-methyl-2-oxobutanoate hydroxymethyltransferase from Stutzerimonas stutzeri (strain A1501) (Pseudomonas stutzeri).